The primary structure comprises 1030 residues: Subtilin biosynthesis protein SpaB (1030 aa).

This sequence to S.epidermidis EpiB and L.lactis NisB.

Its subcellular location is the cell membrane. Its function is as follows. Involved in the post-translational modification of the lantibiotic subtilin. The chain is Subtilin biosynthesis protein SpaB (spaB) from Bacillus subtilis.